The chain runs to 127 residues: Translation initiation factor 5A (127 aa).

At Lys35 the chain carries Hypusine.

It belongs to the eIF-5A family.

Its subcellular location is the cytoplasm. Functions by promoting the formation of the first peptide bond. This Methanothrix thermoacetophila (strain DSM 6194 / JCM 14653 / NBRC 101360 / PT) (Methanosaeta thermophila) protein is Translation initiation factor 5A (eIF5A).